The following is a 364-amino-acid chain: Thymidine kinase (364 aa).

36-43 lines the ATP pocket; sequence GPFGVGKT. Glu-64 serves as the catalytic Proton acceptor. Residue Gln-108 coordinates substrate. Arg-201 contributes to the ATP binding site. Residue Arg-207 coordinates substrate.

Belongs to the herpesviridae thymidine kinase family. Homodimer.

The catalysed reaction is thymidine + ATP = dTMP + ADP + H(+). Catalyzes the transfer of the gamma-phospho group of ATP to thymidine to generate dTMP in the salvage pathway of pyrimidine synthesis. The dTMP serves as a substrate for DNA polymerase during viral DNA replication. Allows the virus to be reactivated and to grow in non-proliferative cells lacking a high concentration of phosphorylated nucleic acid precursors. In Infectious laryngotracheitis virus (strain Thorne V882) (ILTV), this protein is Thymidine kinase.